Reading from the N-terminus, the 200-residue chain is Dephospho-CoA kinase (200 aa).

The DPCK domain maps to 3–200; sequence IIGLTGGIGS…LWQRFATQVE (198 aa). Residue 11-16 participates in ATP binding; that stretch reads GSGKST.

Belongs to the CoaE family.

Its subcellular location is the cytoplasm. It catalyses the reaction 3'-dephospho-CoA + ATP = ADP + CoA + H(+). The protein operates within cofactor biosynthesis; coenzyme A biosynthesis; CoA from (R)-pantothenate: step 5/5. In terms of biological role, catalyzes the phosphorylation of the 3'-hydroxyl group of dephosphocoenzyme A to form coenzyme A. This Corynebacterium diphtheriae (strain ATCC 700971 / NCTC 13129 / Biotype gravis) protein is Dephospho-CoA kinase.